Reading from the N-terminus, the 349-residue chain is Quinolinate synthase (349 aa).

Iminosuccinate contacts are provided by His-52 and Ser-69. Cys-114 serves as a coordination point for [4Fe-4S] cluster. Iminosuccinate is bound by residues 140–142 (YFN) and Ser-157. Cys-201 contacts [4Fe-4S] cluster. Iminosuccinate is bound by residues 227–229 (HPE) and Thr-255. Cys-300 provides a ligand contact to [4Fe-4S] cluster.

The protein belongs to the quinolinate synthase family. Type 2 subfamily. Requires [4Fe-4S] cluster as cofactor.

The protein resides in the cytoplasm. It carries out the reaction iminosuccinate + dihydroxyacetone phosphate = quinolinate + phosphate + 2 H2O + H(+). It participates in cofactor biosynthesis; NAD(+) biosynthesis; quinolinate from iminoaspartate: step 1/1. Catalyzes the condensation of iminoaspartate with dihydroxyacetone phosphate to form quinolinate. In Mycolicibacterium paratuberculosis (strain ATCC BAA-968 / K-10) (Mycobacterium paratuberculosis), this protein is Quinolinate synthase.